The sequence spans 420 residues: Pregnancy-associated glycoprotein 2 (420 aa).

A signal peptide spans 1-15; the sequence is MKWLVILGLVALSDC. Asn56 and Asn79 each carry an N-linked (GlcNAc...) asparagine glycan. Residues 76-417 form the Peptidase A1 domain; that stretch reads YVGNISIGTP…DEGQNRIGLA (342 aa). The active site involves Asp94. Cystine bridges form between Cys107–Cys112 and Cys268–Cys272. Asp277 is a catalytic residue. Cys341 and Cys376 are disulfide-bonded.

It belongs to the peptidase A1 family. As to expression, expressed throughout the chorion, with the signal localized exclusively over the trophectoderm.

The protein localises to the secreted. The protein resides in the extracellular space. The chain is Pregnancy-associated glycoprotein 2 (PAG2) from Sus scrofa (Pig).